Reading from the N-terminus, the 147-residue chain is Large ribosomal subunit protein bL9 (147 aa).

Belongs to the bacterial ribosomal protein bL9 family.

Binds to the 23S rRNA. The chain is Large ribosomal subunit protein bL9 from Halalkalibacterium halodurans (strain ATCC BAA-125 / DSM 18197 / FERM 7344 / JCM 9153 / C-125) (Bacillus halodurans).